The following is a 302-amino-acid chain: DNA-binding transcriptional activator HetR (302 aa).

Ser-153 is a catalytic residue.

Belongs to the peptidase S48 family. In terms of assembly, homodimer; disulfide-linked.

Its function is as follows. Might be involved in temporal and/or spatial regulation of nitrogen fixation. Dimerization is required for DNA-binding. Has both a protease and a DNA-binding activity. This is DNA-binding transcriptional activator HetR from Trichodesmium erythraeum (strain IMS101).